The following is an 885-amino-acid chain: MTQDGYMQQEEEEWEREGLLDPAWEKQQRKTFTAWCNSHLRKAGTQIDNIEEDFRNGLKLMLLLEVISGETLGKPDRGKMRFHKIANVNKALDFIESKGVKLVSIGAEEIVDGNSKMTLGLIWTIILRFAIQDISVEEMTAKEGLLLWCQRKTAPYKNVNVQNFHLSWKDGLAFCALIHRHRPDLIDYGKLRKDNPMDNFNLAFDVAEKHLNIPRMLDAEDVVYTAKPDERAIMTYVSWYYHAFHGAQQAETAANRICKVLKVNQDNERLMEEYERLASDLLEWIRRTTPWLENRTTDNTLPGTQKKLEEFRSYRRQHKPPRVEQKANLETNFNTLQTKLRLSKRPAYMPSEGKMVSDITGAWKGLESAEKGFEEWLLSEMMRLERLDHLAQKFKHKADIHEEWTQGKEEMLVSHDFRQCKLNEIKALKKKHEAFESDLAAHQDRVEQIAAIAQELNALGYHDIASINARCQRICDQWDRLGTLTTRRRQALDEAEQILEKVDLFHLEFAKRAAPFNNWLDETREDLVDMFIVHSIEEIQQLIDAHESFKNTLGEADKEYKTIVGLAQEVQPMATQYQIPGGLENPYTTLTPEVITTKWRDVKQLVPQRDHTLQTELIRQQCNENLRRQFAEKANVVGPWIERQMDAVTAIGMGMQGTLEDQLQRLHEYDQAVVQYRPHVDDLEKIHQEVQEAMIFENRYTQYTMETLRVGWEQLLTSIHRNINEVENQILTRDSKGITQEQLNEFRTSFNHFDKKRTGRLAPEEFKSCLVSLGYNIRNDDRPEFRRILAIVDPNKTGYVHFDAFLDFMTREYTDTDTAEQMIDSFRILAGDKPYITADELRRELPPDQAEYCIRRMTPYNGQCAVPGALDYRSFSTALYGESDL.

Residues 1-242 (MTQDGYMQQE…IMTYVSWYYH (242 aa)) are actin-binding. Calponin-homology (CH) domains are found at residues 26–130 (KQQR…LRFA) and 139–245 (MTAK…HAFH). Spectrin repeat units follow at residues 270–377 (LMEE…EEWL), 389–494 (HLAQ…ALDE), 508–614 (EFAK…HTLQ), and 626–727 (LRRQ…NEVE). 2 consecutive EF-hand domains span residues 741–776 (EQLN…LGYN) and 780–815 (DDRP…EYTD). Residues Asp754, Thr758, Arg760, Glu765, Asp793, Asn795, Thr797, and Tyr799 each coordinate Ca(2+).

The protein belongs to the alpha-actinin family. Homodimer; antiparallel.

Its function is as follows. F-actin cross-linking protein which is thought to anchor actin to a variety of intracellular structures. This is a bundling protein. The polypeptide is Alpha-actinin (Dermatophagoides farinae (American house dust mite)).